The sequence spans 515 residues: Bifunctional NAD(P)H-hydrate repair enzyme Nnr (515 aa).

The NAD(P)H-hydrate epimerase stretch occupies residues 1–227 (MTDHTMKKNP…GLDSWLAGQE (227 aa)). A YjeF N-terminal domain is found at 23 to 225 (IRRGEREAAD…SLGLDSWLAG (203 aa)). An NADPHX 1; for epimerase activity region spans residues 71-75 (NNGGD). K(+) is bound by residues asparagine 72 and aspartate 135. The tract at residues 139 to 145 (GTGLRQA) is NADPHX 1; for epimerase activity. Aspartate 168 contacts (6S)-NADPHX. Serine 171 serves as a coordination point for K(+). In terms of domain architecture, YjeF C-terminal spans 234 to 501 (SAEQLSHWLK…STLQRIVNPE (268 aa)). The interval 235–515 (AEQLSHWLKP…NHDESSNSAP (281 aa)) is ADP-dependent (S)-NAD(P)H-hydrate dehydratase. Glycine 329 lines the (6S)-NADPHX pocket. An NADPHX 2; for dehydratase activity region spans residues 375 to 381 (HPGEAAR). ADP is bound by residues 412-416 (KGAGT) and 432-441 (NAGMASGGMG). Aspartate 442 is a binding site for (6S)-NADPHX.

In the N-terminal section; belongs to the NnrE/AIBP family. This sequence in the C-terminal section; belongs to the NnrD/CARKD family. It depends on K(+) as a cofactor.

It carries out the reaction (6S)-NADHX + ADP = AMP + phosphate + NADH + H(+). The catalysed reaction is (6S)-NADPHX + ADP = AMP + phosphate + NADPH + H(+). The enzyme catalyses (6R)-NADHX = (6S)-NADHX. It catalyses the reaction (6R)-NADPHX = (6S)-NADPHX. Bifunctional enzyme that catalyzes the epimerization of the S- and R-forms of NAD(P)HX and the dehydration of the S-form of NAD(P)HX at the expense of ADP, which is converted to AMP. This allows the repair of both epimers of NAD(P)HX, a damaged form of NAD(P)H that is a result of enzymatic or heat-dependent hydration. The polypeptide is Bifunctional NAD(P)H-hydrate repair enzyme Nnr (nnr) (Escherichia coli (strain K12)).